The chain runs to 700 residues: Elongation factor G (700 aa).

The tr-type G domain occupies 10 to 286 (TKVRNIGIMA…AVIDYLPNPL (277 aa)). GTP is bound by residues 19–26 (AHIDAGKT), 83–87 (DTPGH), and 137–140 (NKMD).

It belongs to the TRAFAC class translation factor GTPase superfamily. Classic translation factor GTPase family. EF-G/EF-2 subfamily.

It localises to the cytoplasm. In terms of biological role, catalyzes the GTP-dependent ribosomal translocation step during translation elongation. During this step, the ribosome changes from the pre-translocational (PRE) to the post-translocational (POST) state as the newly formed A-site-bound peptidyl-tRNA and P-site-bound deacylated tRNA move to the P and E sites, respectively. Catalyzes the coordinated movement of the two tRNA molecules, the mRNA and conformational changes in the ribosome. This Mycolicibacterium vanbaalenii (strain DSM 7251 / JCM 13017 / BCRC 16820 / KCTC 9966 / NRRL B-24157 / PYR-1) (Mycobacterium vanbaalenii) protein is Elongation factor G.